The sequence spans 321 residues: UDP-N-acetylenolpyruvoylglucosamine reductase (321 aa).

An FAD-binding PCMH-type domain is found at 39–205; the sequence is RTGGLAELFY…TAALLEGEPG (167 aa). R185 is a catalytic residue. The active-site Proton donor is the S234. E304 is an active-site residue.

It belongs to the MurB family. Requires FAD as cofactor.

The protein localises to the cytoplasm. The enzyme catalyses UDP-N-acetyl-alpha-D-muramate + NADP(+) = UDP-N-acetyl-3-O-(1-carboxyvinyl)-alpha-D-glucosamine + NADPH + H(+). It functions in the pathway cell wall biogenesis; peptidoglycan biosynthesis. In terms of biological role, cell wall formation. This chain is UDP-N-acetylenolpyruvoylglucosamine reductase, found in Bartonella quintana (strain Toulouse) (Rochalimaea quintana).